The primary structure comprises 298 residues: Acetate permease A (298 aa).

Residues 1–43 (MSAEQNHGLEKDVGGPAAPAAAAPNAPAAAPGAPPAGMSAEEH) form a disordered region. Low complexity predominate over residues 14–37 (GGPAAPAAAAPNAPAAAPGAPPAG). Transmembrane regions (helical) follow at residues 86–106 (APLGLSAFALTTFVLSCINMG), 115–135 (IVIALAFGYGGLVQLLAGMWE), 146–166 (ALSSYGGFWIAFAIVLTPGGF), 185–205 (SFGLFLMGWFIFTTIMLFCTL), 210–230 (AFFLLFLFLDLAFLLLGVGYI), and 245–265 (AGGFFGLLAAFAAWYNALAGI).

It belongs to the acetate uptake transporter (AceTr) (TC 2.A.96) family.

The protein localises to the cell membrane. It is found in the vacuole membrane. Functionally, high affinity monocarboxylate transporter (MCT) involved in acetate uptake. Unlike other activities involved in acetate utilization, acpA is dispensable for growth on the acetate precursor ethanol. In Emericella nidulans (strain FGSC A4 / ATCC 38163 / CBS 112.46 / NRRL 194 / M139) (Aspergillus nidulans), this protein is Acetate permease A.